A 201-amino-acid chain; its full sequence is Protein CD300H (201 aa).

Positions 1–24 (MTQRAGAAMLPSALLLLCVPGCLT) are cleaved as a signal peptide. The Ig-like V-type domain maps to 25 to 123 (VSGPSTVMGA…ATILQEDGLS (99 aa)). The Extracellular portion of the chain corresponds to 25–168 (VSGPSTVMGA…CQGSLPSSTC (144 aa)). Residues Cys-43 and Cys-111 are joined by a disulfide bond. A glycan (N-linked (GlcNAc...) asparagine) is linked at Asn-100. Residues 169–189 (FLLLPLLKVPLLLSILGAILW) traverse the membrane as a helical segment. Over 190-201 (VNRPWRTPWTES) the chain is Cytoplasmic.

Belongs to the CD300 family. In terms of assembly, interacts with TYROBP and HCST. In terms of tissue distribution, expressed on CD16+ monocytes and myeloid dendritic cells (at protein level). By contrast, not detected in lymphocytes nor granulocytes (at protein level).

It localises to the membrane. The protein localises to the secreted. Functionally, may play an important role in innate immunity by mediating a signal for the production of a neutrophil chemoattractant. This Homo sapiens (Human) protein is Protein CD300H.